The primary structure comprises 1223 residues: Rho family-interacting cell polarization regulator 1 (1223 aa).

Phosphoserine is present on S22. Residues 83-112 (RGLTAYLEVHQQEQEKLQRQIKESKRNSRL) adopt a coiled-coil conformation. Phosphoserine is present on residues S345 and S347. The residue at position 351 (T351) is a Phosphothreonine. The disordered stretch occupies residues 371–411 (NGTAWSLSSESSDDSSSPQLSGTARHSTPKPLVQQPEPLPV). Low complexity-rich tracts occupy residues 376–391 (SLSS…PQLS) and 399–411 (PKPL…PLPV). Phosphoserine occurs at positions 451, 454, and 468. Composition is skewed to low complexity over residues 566-586 (TTIG…GSVP) and 595-655 (TPSP…TSPT). Disordered stretches follow at residues 566 to 771 (TTIG…QHSE) and 856 to 887 (FLND…LDSS). The segment covering 656–665 (QEAKMSTHTT) has biased composition (polar residues). The span at 673–688 (TTTSPISTTESPSPST) shows a compositional bias: low complexity. 2 stretches are compositionally biased toward polar residues: residues 693-703 (ISSSSAESTGP) and 725-741 (ASCT…SKPL). S748 carries the post-translational modification Phosphoserine. The span at 748–767 (SPEQIPKSPSSSPSSSAPEP) shows a compositional bias: low complexity. Residues 858–867 (NDDEDEDNDG) show a composition bias toward acidic residues. A compositionally biased stretch (basic and acidic residues) spans 868 to 885 (PGDRHTSSPEVVAEDRLD). S874 and S875 each carry phosphoserine.

This sequence belongs to the RIPOR family. Interacts (via N-terminus) with RHOA (GTP-bound form); this interaction links active RHOA to STK24 and STK26 kinases. Interacts with RHOB. Interacts with RHOC. Interacts (via C-terminus) with PDCD10; this interaction occurs in a Rho-independent manner. Interacts (via C-terminus) with STK24; this interaction occurs in a PDCD10-dependent and Rho-independent manner. Interacts (via C-terminus) with STK26; this interaction occurs in a PDCD10-dependent and Rho-independent manner. Interacts (via N-terminus) with 14-3-3 proteins; these interactions occur in a Rho-dependent manner. Expressed in the kidney exclusively by glomerular podocytes.

Its subcellular location is the cytoplasm. The protein localises to the golgi apparatus. Its function is as follows. Downstream effector protein for Rho-type small GTPases that plays a role in cell polarity and directional migration. Acts as an adapter protein, linking active Rho proteins to STK24 and STK26 kinases, and hence positively regulates Golgi reorientation in polarized cell migration upon Rho activation. Involved in the subcellular relocation of STK26 from the Golgi to cytoplasm punctae in a Rho- and PDCD10-dependent manner upon serum stimulation. In Mus musculus (Mouse), this protein is Rho family-interacting cell polarization regulator 1.